A 411-amino-acid chain; its full sequence is Methylthioribose-1-phosphate isomerase (411 aa).

An N-acetylserine modification is found at Ser2. Residue Asp280 is the Proton donor of the active site. Phosphoserine is present on Ser351.

It belongs to the eIF-2B alpha/beta/delta subunits family. MtnA subfamily. Homodimer.

The protein localises to the cytoplasm. The protein resides in the nucleus. The enzyme catalyses 5-(methylsulfanyl)-alpha-D-ribose 1-phosphate = 5-(methylsulfanyl)-D-ribulose 1-phosphate. The protein operates within amino-acid biosynthesis; L-methionine biosynthesis via salvage pathway; L-methionine from S-methyl-5-thio-alpha-D-ribose 1-phosphate: step 1/6. Catalyzes the interconversion of methylthioribose-1-phosphate (MTR-1-P) into methylthioribulose-1-phosphate (MTRu-1-P). The chain is Methylthioribose-1-phosphate isomerase from Saccharomyces cerevisiae (strain JAY291) (Baker's yeast).